Consider the following 461-residue polypeptide: Photosystem II CP43 reaction center protein (461 aa).

Positions 1-2 (ME) are excised as a propeptide. At threonine 3 the chain carries N-acetylthreonine. A Phosphothreonine modification is found at threonine 3. Helical transmembrane passes span 57-81 (LFEVAHFVPQKPMYEQGLILLPHLA), 122-143 (LAGPDTLEESFRFFGYTWKRKK), 166-188 (KAMYGGGVYDTWWPGGGDVRSIT), 243-263 (RPSPWVVRTFVWSGEAYLSYS), and 279-300 (WFNNTVYPSEFYGPTGPEASQA). Glutamate 355 contributes to the [CaMn4O5] cluster binding site. The chain crosses the membrane as a helical span at residues 435–459 (RARAAAIGFEKGIDRSREIARKLKP).

This sequence belongs to the PsbB/PsbC family. PsbC subfamily. As to quaternary structure, PSII is composed of 1 copy each of membrane proteins PsbA, PsbB, PsbC, PsbD, PsbE, PsbF, PsbH, PsbI, PsbJ, PsbK, PsbL, PsbM, PsbT, PsbY, PsbZ, Psb30/Ycf12, at least 3 peripheral proteins of the oxygen-evolving complex and a large number of cofactors. It forms dimeric complexes. Requires Binds multiple chlorophylls and provides some of the ligands for the Ca-4Mn-5O cluster of the oxygen-evolving complex. It may also provide a ligand for a Cl- that is required for oxygen evolution. PSII binds additional chlorophylls, carotenoids and specific lipids. as cofactor.

The protein resides in the plastid. It localises to the chloroplast thylakoid membrane. Its function is as follows. One of the components of the core complex of photosystem II (PSII). It binds chlorophyll and helps catalyze the primary light-induced photochemical processes of PSII. PSII is a light-driven water:plastoquinone oxidoreductase, using light energy to abstract electrons from H(2)O, generating O(2) and a proton gradient subsequently used for ATP formation. The sequence is that of Photosystem II CP43 reaction center protein from Euglena gracilis.